The primary structure comprises 855 residues: Leucine--tRNA ligase (855 aa).

Positions 45-55 (PYPSGRLHMGH) match the 'HIGH' region motif. The 'KMSKS' region signature appears at 619–623 (KMSKS). Lysine 622 is a binding site for ATP.

This sequence belongs to the class-I aminoacyl-tRNA synthetase family.

It is found in the cytoplasm. It catalyses the reaction tRNA(Leu) + L-leucine + ATP = L-leucyl-tRNA(Leu) + AMP + diphosphate. The polypeptide is Leucine--tRNA ligase (Hyphomonas neptunium (strain ATCC 15444)).